A 207-amino-acid polypeptide reads, in one-letter code: Protein GET1 (207 aa).

The Lumenal segment spans residues methionine 1–leucine 4. Residues leucine 5–serine 24 traverse the membrane as a helical segment. At threonine 25 to arginine 110 the chain is on the cytoplasmic side. A coiled-coil region spans residues methionine 44 to arginine 97. Residues tryptophan 111–phenylalanine 131 traverse the membrane as a helical segment. Over threonine 132–threonine 155 the chain is Lumenal. Residues valine 156–valine 172 form a helical membrane-spanning segment. Over glycine 173–glutamine 207 the chain is Cytoplasmic.

Belongs to the WRB/GET1 family. As to quaternary structure, interacts with GET3.

It is found in the endoplasmic reticulum membrane. Functionally, required for the post-translational delivery of tail-anchored (TA) proteins to the endoplasmic reticulum. Acts as a membrane receptor for soluble GET3, which recognizes and selectively binds the transmembrane domain of TA proteins in the cytosol. This Paracoccidioides lutzii (strain ATCC MYA-826 / Pb01) (Paracoccidioides brasiliensis) protein is Protein GET1.